The following is a 266-amino-acid chain: Vitamin B12-binding protein (266 aa).

The N-terminal stretch at 1-22 is a signal peptide; it reads MAKSLFRALVALSFLAPLWLNA. The 242-residue stretch at 25 to 266 folds into the Fe/B12 periplasmic-binding domain; that stretch reads RVITLSPANT…QLCNALSQVD (242 aa). Residues tyrosine 50 and 242 to 246 each bind cyanocob(III)alamin; that span reads DWFER. Cysteine 183 and cysteine 259 form a disulfide bridge.

The protein belongs to the BtuF family. As to quaternary structure, the complex is composed of two ATP-binding proteins (BtuD), two transmembrane proteins (BtuC) and a solute-binding protein (BtuF).

The protein localises to the periplasm. In terms of biological role, part of the ABC transporter complex BtuCDF involved in vitamin B12 import. Binds vitamin B12 and delivers it to the periplasmic surface of BtuC. This chain is Vitamin B12-binding protein, found in Escherichia coli O6:H1 (strain CFT073 / ATCC 700928 / UPEC).